A 294-amino-acid chain; its full sequence is Polyketide transferase grgF (294 aa).

Residues C115, D240, and H269 contribute to the active site.

Belongs to the polyketide transferase af380 family. Homodimer.

It functions in the pathway secondary metabolite biosynthesis. Functionally, polyketide transferase; part of the gene cluster that mediates the biosynthesis of gregatin A, a fungal polyketide featuring an alkylated furanone core. The PKS grgA synthesizes C11 and C4 polyketide chains in the presence and absence of the trans-enoyl reductase grgB, respectively. The polyketide transferase grgF is then responsible for the fusion of the two carbon chains to produce the furanone skeleton of gregatin A. GrgF first undergoes a conformational change to an open form, and the active site Cys-115 is acylated by the C11 chain. After the elimination of the phosphopantetheinyl chain, the second polyketide chain of four carbons long is delivered adjacent to the enzyme-bound C11 chain. The catalytic histidine, His-269, deprotonates a proton from C-2 of the long chain, and the resultant carbanion attacks the C-1 carbonyl of the crotonyl group to perform Claisen condensation, by which the phosphopantetheinyl chain is released. Eventually, hydrolysis of the thioester linkage probably by a His-269-activated water molecule completes the reaction to afford the grgF final product. Next, the cytochrome P450 monooxygenase grgG accepts the unstable grgF final product as substrate and performs the oxidative cyclization to furnish the gregatin scaffold and leads to the formation of desmethylgregatin A. Finally, the O-methyltransferase grgD methylates the carboxyl group of desmethylgregatin A to provide gregatin A. This is Polyketide transferase grgF from Penicillium sp.